We begin with the raw amino-acid sequence, 201 residues long: Small ribosomal subunit protein uS4 (201 aa).

Residues 91 to 151 form the S4 RNA-binding domain; that stretch reads SRLDNVVYRA…EKSRKMVWFD (61 aa).

This sequence belongs to the universal ribosomal protein uS4 family. As to quaternary structure, part of the 30S ribosomal subunit. Contacts protein S5. The interaction surface between S4 and S5 is involved in control of translational fidelity.

One of the primary rRNA binding proteins, it binds directly to 16S rRNA where it nucleates assembly of the body of the 30S subunit. Its function is as follows. With S5 and S12 plays an important role in translational accuracy. This is Small ribosomal subunit protein uS4 from Corynebacterium kroppenstedtii (strain DSM 44385 / JCM 11950 / CIP 105744 / CCUG 35717).